The sequence spans 146 residues: Ribosomal RNA large subunit methyltransferase H (146 aa).

S-adenosyl-L-methionine contacts are provided by residues Leu68, Gly95, and 114 to 119; that span reads LSSLTF.

Belongs to the RNA methyltransferase RlmH family. In terms of assembly, homodimer.

It is found in the cytoplasm. It catalyses the reaction pseudouridine(1915) in 23S rRNA + S-adenosyl-L-methionine = N(3)-methylpseudouridine(1915) in 23S rRNA + S-adenosyl-L-homocysteine + H(+). Its function is as follows. Specifically methylates the pseudouridine at position 1915 (m3Psi1915) in 23S rRNA. The chain is Ribosomal RNA large subunit methyltransferase H from Thermodesulfovibrio yellowstonii (strain ATCC 51303 / DSM 11347 / YP87).